Consider the following 346-residue polypeptide: Uroporphyrinogen decarboxylase (346 aa).

Substrate contacts are provided by residues 23–27 (RQAGR), aspartate 72, tyrosine 155, serine 209, and histidine 322.

Belongs to the uroporphyrinogen decarboxylase family. In terms of assembly, homodimer.

The protein localises to the cytoplasm. The catalysed reaction is uroporphyrinogen III + 4 H(+) = coproporphyrinogen III + 4 CO2. It participates in porphyrin-containing compound metabolism; protoporphyrin-IX biosynthesis; coproporphyrinogen-III from 5-aminolevulinate: step 4/4. Catalyzes the decarboxylation of four acetate groups of uroporphyrinogen-III to yield coproporphyrinogen-III. In Anaeromyxobacter dehalogenans (strain 2CP-C), this protein is Uroporphyrinogen decarboxylase.